A 299-amino-acid polypeptide reads, in one-letter code: Recombination-associated protein RdgC (299 aa).

The protein belongs to the RdgC family.

Its subcellular location is the cytoplasm. It localises to the nucleoid. May be involved in recombination. The sequence is that of Recombination-associated protein RdgC from Bordetella parapertussis (strain 12822 / ATCC BAA-587 / NCTC 13253).